The primary structure comprises 310 residues: Protein FAM153A (310 aa).

4 disordered regions span residues 39-58, 108-136, 156-184, and 250-297; these read LGVPQCERDEGSLGKPLCPP, QTNGDLEDLEEHGPGQTVSEEATEVHTME, SYNGEEEDPEEVKTSLGVPQRGDLEDLEE, and TITG…KKSR. Residues 259–268 show a composition bias toward low complexity; that stretch reads SASPSSAPAE. The segment covering 270–282 has biased composition (basic and acidic residues); that stretch reads ATEKTKVEEEVKT. A compositionally biased stretch (basic residues) spans 283 to 297; sequence RKPKKKTRKPSKKSR.

The protein belongs to the FAM153 family.

The polypeptide is Protein FAM153A (FAM153A) (Homo sapiens (Human)).